We begin with the raw amino-acid sequence, 506 residues long: Cysteine protease 1 (506 aa).

The disordered stretch occupies residues 1–21 (MTSSRPSGRDSTGWQETVSNT). The Nucleophile role is filled by Cys-226. Residues Asp-399 and His-401 contribute to the active site.

This sequence belongs to the peptidase C54 family.

It localises to the cytoplasm. It is found in the nucleus. Its subcellular location is the preautophagosomal structure. It catalyses the reaction [protein]-C-terminal L-amino acid-glycyl-phosphatidylethanolamide + H2O = [protein]-C-terminal L-amino acid-glycine + a 1,2-diacyl-sn-glycero-3-phosphoethanolamine. Its function is as follows. Cysteine protease that plays a key role in cytoplasm to vacuole transport (Cvt) and autophagy by mediating both proteolytic activation and delipidation of ATG8. Required for selective autophagic degradation of the nucleus (nucleophagy) as well as for mitophagy which contributes to regulate mitochondrial quantity and quality by eliminating the mitochondria to a basal level to fulfill cellular energy requirements and preventing excess ROS production. The protease activity is required for proteolytic activation of ATG8: cleaves the C-terminal amino acid of ATG8 to reveal a C-terminal glycine. ATG8 ubiquitin-like activity requires the exposure of the glycine at the C-terminus for its conjugation to phosphatidylethanolamine (PE) and its insertion to membranes, which is necessary for autophagy. The ATG8-PE conjugate mediates tethering between adjacent membranes and stimulates membrane hemifusion, leading to expansion of the autophagosomal membrane during autophagy. In addition to the protease activity, also catalyzes deconjugation of PE-conjugated forms of ATG8 during macroautophagy: ATG8 delipidation is required to release the protein from membranes, which facilitates multiple events during macroautophagy, and especially for efficient autophagosome biogenesis, the assembly of ATG9-containing tubulovesicular clusters into phagophores/autophagosomes, and for the disassembly of PAS-associated ATG components. ATG8 delipidation by ATG4 also recycles ATG8-PE generated on inappropriate membranes to maintain a reservoir of unlipidated ATG8 that is required for autophagosome formation at the PAS. The protein is Cysteine protease 1 (cpr-1) of Neurospora crassa (strain ATCC 24698 / 74-OR23-1A / CBS 708.71 / DSM 1257 / FGSC 987).